Here is a 351-residue protein sequence, read N- to C-terminus: Cytoplasmic dynein 2 light intermediate chain 1 (351 aa).

The tract at residues 303 to 335 (GTLKAVQDPARDPQYAESEVDEMRVQKDQELEH) is disordered. The segment covering 323–335 (DEMRVQKDQELEH) has biased composition (basic and acidic residues).

This sequence belongs to the dynein light intermediate chain family. In terms of assembly, light intermediate chain of the cytoplasmic dynein complex 2, a multisubunit complex composed at least of eleven different proteins. The cytoplasmic dynein 2 complex consists of two catalytic heavy chains (HCs) and a number of non-catalytic subunits presented by intermediate chains (ICs), light intermediate chains (LICs) and light chains (LCs). Among them, a heavy chain (DYNC2H1), two intermediate chains (DYNC2I2 and DYNC2I1), a light intermediate chain (DYNC2LI1), and a light chain (DYNLT2B) are unique to the dynein-2 complex, but a subset of light chains are also shared by dynein-1 and dynein-2 complexes. Dynein-2 complex is built around two copies of cytoplasmic dynein 2 heavy chain 1 (DYNC2H1). The C-terminal region forms the motor domain, which converts the energy from ATP hydrolysis into movement. Its N-terminal region forms the tail, an extended structure that binds the other subunits and holds the two heavy chains in a homodimer. Interacts with DYNC2H1 (via N-terminus); this interaction stabilizes the dynein-2 complex structure. As to expression, specifically expressed by ciliated cells in brain, lung, spleen, testis and kidney (at protein level). Enriched in the ependymal layer lining the lateral ventricles (at protein level).

It localises to the cytoplasm. It is found in the cell projection. Its subcellular location is the cilium. The protein resides in the cytoskeleton. The protein localises to the cilium basal body. It localises to the cilium axoneme. It is found in the microtubule organizing center. Its subcellular location is the centrosome. Functionally, acts as one of several non-catalytic accessory components of the cytoplasmic dynein 2 complex (dynein-2 complex), a motor protein complex that drives the movement of cargos along microtubules within cilia and flagella in concert with the intraflagellar transport (IFT) system, facilitating the assembly of these organelles. Involved in the regulation of ciliary length. The sequence is that of Cytoplasmic dynein 2 light intermediate chain 1 (Dync2li1) from Mus musculus (Mouse).